The sequence spans 400 residues: S-adenosylmethionine synthase (400 aa).

Position 17 (His17) interacts with ATP. Residue Asp19 participates in Mg(2+) binding. Glu45 contributes to the K(+) binding site. L-methionine is bound by residues Glu58 and Gln101. The interval 101–111 (QSADIAMGVDQ) is flexible loop. Residues 177 to 179 (DGK), 244 to 245 (RF), Asp253, 259 to 260 (RK), Ala276, and Lys280 each bind ATP. Asp253 contacts L-methionine. L-methionine is bound at residue Lys284.

Belongs to the AdoMet synthase family. In terms of assembly, homotetramer; dimer of dimers. It depends on Mg(2+) as a cofactor. The cofactor is K(+).

It localises to the cytoplasm. It carries out the reaction L-methionine + ATP + H2O = S-adenosyl-L-methionine + phosphate + diphosphate. The protein operates within amino-acid biosynthesis; S-adenosyl-L-methionine biosynthesis; S-adenosyl-L-methionine from L-methionine: step 1/1. Catalyzes the formation of S-adenosylmethionine (AdoMet) from methionine and ATP. The overall synthetic reaction is composed of two sequential steps, AdoMet formation and the subsequent tripolyphosphate hydrolysis which occurs prior to release of AdoMet from the enzyme. The protein is S-adenosylmethionine synthase of Bacillus subtilis (strain 168).